The following is a 428-amino-acid chain: MGGLFSRWRTKPSTVEVLESIDKEIQALEEFREKNQRLQKLWVGRLILYSSVLYLFTCLIVYLWYLPDEFTARLAMTLPFFAFPLIIWSIRTVIIFFFSKRTERNNEALDDLKSQRKKILEEVMEKETYKTAKLILERFDPDSKKAKECEPPSAGAAVTARPGQEIRQRTAAQRNLSPTPASPNQGPPPQVPVSPGPPKDSSAPGGPPERTVTPALSSNVLPRHLGSPATSVPGMGLHPPGPPLARPILPRERGALDRIVEYLVGDGPQNRYALICQQCFSHNGMALKEEFEYIAFRCAYCFFLNPARKTRPQAPRLPEFSFEKRQVVEGSSSVGPLPSGSVLSSDNQFNEESLEHDVLDDNTEQTDDKIPATEQTNQVIEKASDSEEPEEKQETENEEASVIETNSTVPGADSIPDPELSGESLTAE.

Gly-2 is lipidated: N-myristoyl glycine. The Cytoplasmic portion of the chain corresponds to 2–45 (GGLFSRWRTKPSTVEVLESIDKEIQALEEFREKNQRLQKLWVGR). Residues 16 to 41 (EVLESIDKEIQALEEFREKNQRLQKL) adopt a coiled-coil conformation. The chain crosses the membrane as a helical span at residues 46–66 (LILYSSVLYLFTCLIVYLWYL). Over 67–77 (PDEFTARLAMT) the chain is Lumenal. The chain crosses the membrane as a helical span at residues 78–98 (LPFFAFPLIIWSIRTVIIFFF). Residues 99–428 (SKRTERNNEA…ELSGESLTAE (330 aa)) lie on the Cytoplasmic side of the membrane. Positions 102–128 (TERNNEALDDLKSQRKKILEEVMEKET) form a coiled coil. A phosphoserine mark is found at Ser-114, Ser-153, Ser-177, Ser-182, and Ser-194. Positions 143-247 (SKKAKECEPP…HPPGPPLARP (105 aa)) are disordered. The span at 185 to 198 (QGPPPQVPVSPGPP) shows a compositional bias: pro residues. Residues Thr-211 and Thr-213 each carry the phosphothreonine modification. Ser-217 and Ser-227 each carry phosphoserine. The segment at 276–301 (CQQCFSHNGMALKEEFEYIAFRCAYC) adopts a C4-type; plays a role in ER morphology zinc-finger fold. Ser-321, Ser-353, and Ser-384 each carry phosphoserine. The segment at 356 to 428 (HDVLDDNTEQ…ELSGESLTAE (73 aa)) is disordered. Residues 386 to 401 (SEEPEEKQETENEEAS) are compositionally biased toward acidic residues. Residue Ser-414 is modified to Phosphoserine.

The protein belongs to the lunapark family. In terms of assembly, homodimer; homodimerization requires the C4-type zinc finger motif and decreases during mitosis in a phosphorylation-dependent manner. Post-translationally, myristoylated; myristoylation is necessary for the endoplasmic reticulum (ER) three-way ER tubular junction formation, but is not required neither for membrane translocation, membrane topology formation, nor for the specific localization to ER membranes. Phosphorylated. Phosphorylation occurs at Ser-177, Ser-182, Ser-217, Ser-227, Ser-321 and Ser-384 during interphase. Phosphorylation occurs at Ser-114, Ser-153, Ser-194, Thr-211 and Ser-353 during mitosis; these phosphorylations reduce both its homodimerization and the ER three-way tubular junction formation. In terms of processing, subject to proteasomal degradation following phosphorylation during mitosis. In terms of tissue distribution, expressed in neural precursor cells, where it is detected at the growth-cone-like structure and branching sites of neurite-like processes.

It is found in the endoplasmic reticulum membrane. Its function is as follows. Endoplasmic reticulum (ER)-shaping membrane protein that plays a role in determining ER morphology. Involved in the stabilization of nascent three-way ER tubular junctions within the ER network. May also play a role as a curvature-stabilizing protein within the three-way ER tubular junction network. May be involved in limb development. Is involved in central nervous system development. The polypeptide is Endoplasmic reticulum junction formation protein lunapark (Homo sapiens (Human)).